The primary structure comprises 205 residues: Outer-membrane lipoprotein LolB (205 aa).

An N-terminal signal peptide occupies residues 1–17 (MFLRHCITFTLIALLAG). Cys-18 carries the N-palmitoyl cysteine lipid modification. The S-diacylglycerol cysteine moiety is linked to residue Cys-18.

This sequence belongs to the LolB family. Monomer.

It localises to the cell outer membrane. Functionally, plays a critical role in the incorporation of lipoproteins in the outer membrane after they are released by the LolA protein. The polypeptide is Outer-membrane lipoprotein LolB (Pseudomonas putida (strain GB-1)).